Reading from the N-terminus, the 399-residue chain is CCA-adding enzyme (399 aa).

ATP-binding residues include Gly-32 and Arg-35. CTP-binding residues include Gly-32 and Arg-35. Residues Asp-45 and Asp-47 each contribute to the Mg(2+) site. ATP-binding residues include Arg-116, Asp-159, Arg-162, Arg-165, and Arg-168. The CTP site is built by Arg-116, Asp-159, Arg-162, Arg-165, and Arg-168.

The protein belongs to the tRNA nucleotidyltransferase/poly(A) polymerase family. Bacterial CCA-adding enzyme type 3 subfamily. In terms of assembly, homodimer. Mg(2+) is required as a cofactor.

The catalysed reaction is a tRNA precursor + 2 CTP + ATP = a tRNA with a 3' CCA end + 3 diphosphate. It catalyses the reaction a tRNA with a 3' CCA end + 2 CTP + ATP = a tRNA with a 3' CCACCA end + 3 diphosphate. Functionally, catalyzes the addition and repair of the essential 3'-terminal CCA sequence in tRNAs without using a nucleic acid template. Adds these three nucleotides in the order of C, C, and A to the tRNA nucleotide-73, using CTP and ATP as substrates and producing inorganic pyrophosphate. tRNA 3'-terminal CCA addition is required both for tRNA processing and repair. Also involved in tRNA surveillance by mediating tandem CCA addition to generate a CCACCA at the 3' terminus of unstable tRNAs. While stable tRNAs receive only 3'-terminal CCA, unstable tRNAs are marked with CCACCA and rapidly degraded. The sequence is that of CCA-adding enzyme from Streptococcus sanguinis (strain SK36).